The sequence spans 858 residues: MSASVAEPPPALSRKAEFKAAKAELLARFKSANHVTPLMHALSRATDDALRSLWQECGLPATLALVAVGGFGRGELSPHSDVDILVLLPDAHASELDERIERFIGMAWDLGLEIGSSVRTVDQCIEEASHDVTVQTSLLEARRIVGSTALFERFMLRYREALDARAFFQAKVLEMRQRHAKFQDTPYSLEPNVKESPGGLRDLQTILWIARAAGFGSSWRELDTRGLITDREARELRRNEGFLKTLRARLHVIAGRRQDILVFDLQTQAAESFGYQPTSAKRASEQLMRRYYWAAKAVTQLATILIQNIEAQLFPATSGVTRVLSPGRFVEKQGMLEIAADDVFERHPDAILEAFLLYEATRGVKGLSARTLRALYNSRDVMNNAWRRDPRNRHTFMQILQQPEGITHAFRLMNQTSVLGRYLLNFRRIVGQMQHDLYHVYTVDQHILMVLRNIRRFAVAEHAHEYPFCSQLIVNFERPWVLYVAALFHDIAKGRGGDHSALGMADARRFCREHGIEGDDAALVVWLVQHHLTMSQVAQKQDTSDPVVIKRFAELVGSERRLTALYLLTVADIRGTSPKVWNTWKGKLLEDLYRATLAVLGGAQPDAHSELKTRQEEALALLRLETVPPDAHRALWDQLDVGYFLRHDAADIAWQTRVLYRHVAADTAIVRARPSPVGDALQVLVYVKDRSDLFAGICAYFDRNGLSVLDARVNTTRHGYALDNFIVTQTEHDVQYRDIANLVEQQLAARLAESAPLPEPSKGRLSRLSRTFPITPRVDLRADERGQYYILSVSANDRPGLLYSIARVLAEHRVGVHAARINTLGERVEDVFMLDGTGLSDNRLQIQVETELLRAIAV.

Positions 1–324 (MSASVAEPPP…PATSGVTRVL (324 aa)) are uridylyltransferase. Residues 325 to 681 (SPGRFVEKQG…ARPSPVGDAL (357 aa)) form a uridylyl-removing region. Positions 443–565 (VDQHILMVLR…VGSERRLTAL (123 aa)) constitute an HD domain. ACT domains lie at 682 to 761 (QVLV…PEPS) and 790 to 858 (ILSV…AIAV).

This sequence belongs to the GlnD family. The cofactor is Mg(2+).

The catalysed reaction is [protein-PII]-L-tyrosine + UTP = [protein-PII]-uridylyl-L-tyrosine + diphosphate. The enzyme catalyses [protein-PII]-uridylyl-L-tyrosine + H2O = [protein-PII]-L-tyrosine + UMP + H(+). Its activity is regulated as follows. Uridylyltransferase (UTase) activity is inhibited by glutamine, while glutamine activates uridylyl-removing (UR) activity. In terms of biological role, modifies, by uridylylation and deuridylylation, the PII regulatory proteins (GlnB and homologs), in response to the nitrogen status of the cell that GlnD senses through the glutamine level. Under low glutamine levels, catalyzes the conversion of the PII proteins and UTP to PII-UMP and PPi, while under higher glutamine levels, GlnD hydrolyzes PII-UMP to PII and UMP (deuridylylation). Thus, controls uridylylation state and activity of the PII proteins, and plays an important role in the regulation of nitrogen assimilation and metabolism. The sequence is that of Bifunctional uridylyltransferase/uridylyl-removing enzyme from Burkholderia mallei (strain NCTC 10247).